A 326-amino-acid chain; its full sequence is Target of rapamycin complex subunit LST8 (326 aa).

Met-1 is modified (N-acetylmethionine). WD repeat units follow at residues 1–37, 40–80, 83–122, 126–165, and 168–207; these read MNTTPGTVGSDPVILATAGYDHTVRFWQAHSGICTRT, HQDS…PIIS, GVSKNIASVGFHEDGRWMYTGGEDCTARIWDLRSRNLQCQ, QVNAPINCVCLHPNQAELIVGDQSGAIHIWDLKTDHNEQL, and EPESSITSAHIDPDASYMAAVNSAGNCYVWNLTGGIGDDV. Thr-51 is modified (phosphothreonine). Residue Lys-86 forms a Glycyl lysine isopeptide (Lys-Gly) (interchain with G-Cter in SUMO3) linkage. Residues Lys-215, Lys-245, and Lys-261 each participate in a glycyl lysine isopeptide (Lys-Gly) (interchain with G-Cter in SUMO3) cross-link. One copy of the WD 6 repeat lies at 218-257; sequence AHTRYALQCRFSPDSTLLATCSADQTCKIWRTSNFSLMTE. The stretch at 268-309 is one WD 7 repeat; sequence SSRGWMWGCAFSGDSQYIVTASSDNLARLWCVETGEIKREYG. A Glycyl lysine isopeptide (Lys-Gly) (interchain with G-Cter in SUMO3); alternate cross-link involves residue Lys-305. Glycyl lysine isopeptide (Lys-Gly) (interchain with G-Cter in ubiquitin); alternate cross-links involve residues Lys-305 and Lys-313. Lys-313 is covalently cross-linked (Glycyl lysine isopeptide (Lys-Gly) (interchain with G-Cter in SUMO1); alternate).

This sequence belongs to the WD repeat LST8 family. In terms of assembly, part of the mechanistic target of rapamycin complex 1 (mTORC1) which contains MTOR, MLST8 and RPTOR. mTORC1 associates with AKT1S1/PRAS40, which inhibits its activity. mTORC1 binds to and is inhibited by FKBP12-rapamycin. Within mTORC1, interacts directly with MTOR and RPTOR. Component of the mechanistic target of rapamycin complex 2 (mTORC2), consisting in two heterotretramers composed of MTOR, MLST8, RICTOR and MAPKAP1/SIN1. Contrary to mTORC1, mTORC2 does not bind to and is not sensitive to FKBP12-rapamycin. mTORC1 and mTORC2 associate with DEPTOR, which regulates their activity. Interacts with RHEB. Interacts with MEAK7. Interacts with SIK3. Interacts with SLC38A7; this interaction promotes the recruitment of mTORC1 to the lysosome and its subsequent activation. In terms of processing, phosphorylation at Thr-51 by CDK1 promotes ubiquitination by the SCF(FBXW7) complex, followed by degradation. Post-translationally, ubiquitination by the SCF(FBXW7) and SCF(FBXW11) complexes following phosphorylation at Thr-51 by CDK1, leads to its degradation by the proteasome. Ubiquitination at Lys-305 and Lys-313 by TRAF2 via 'Lys-63'-linked polyubiquitin chains inhibits formation of the mTORC2 complex, while promoting formation of the mTORC1 complex: ubiquitination disrupts the interaction between MLST8 and MAPKAP1/SIN1 to favor mTORC1 assembly. Deubiquitination at Lys-305 and Lys-313 by OTUD7B promotes MLST8 interaction with MAPKAP1/SIN1, facilitating mTORC2 assembly. Sumoylation with SUMO1, SUMO2 and SUMO3 promotes assembly of both mTORC1 and mTORC2 complexes.

The protein localises to the lysosome membrane. It is found in the cytoplasm. Its function is as follows. Subunit of both mTORC1 and mTORC2, which regulates cell growth and survival in response to nutrient and hormonal signals. mTORC1 is activated in response to growth factors or amino acids. In response to nutrients, mTORC1 is recruited to the lysosome membrane and promotes protein, lipid and nucleotide synthesis by phosphorylating several substrates, such as ribosomal protein S6 kinase (RPS6KB1 and RPS6KB2) and EIF4EBP1 (4E-BP1). In the same time, it inhibits catabolic pathways by phosphorylating the autophagy initiation components ULK1 and ATG13, as well as transcription factor TFEB, a master regulators of lysosomal biogenesis and autophagy. The mTORC1 complex is inhibited in response to starvation and amino acid depletion. Within mTORC1, MLST8 interacts directly with MTOR and enhances its kinase activity. In nutrient-poor conditions, stabilizes the MTOR-RPTOR interaction and favors RPTOR-mediated inhibition of MTOR activity. As part of the mTORC2 complex, transduces signals from growth factors to pathways involved in proliferation, cytoskeletal organization, lipogenesis and anabolic output. mTORC2 is also activated by growth factors, but seems to be nutrient-insensitive. In response to growth factors, mTORC2 phosphorylates and activates AGC protein kinase family members, including AKT (AKT1, AKT2 and AKT3), PKC (PRKCA, PRKCB and PRKCE) and SGK1. mTORC2 functions upstream of Rho GTPases to regulate the actin cytoskeleton, probably by activating one or more Rho-type guanine nucleotide exchange factors. mTORC2 promotes the serum-induced formation of stress-fibers or F-actin. mTORC2 plays a critical role in AKT1 activation by mediating phosphorylation of different sites depending on the context, such as 'Thr-450', 'Ser-473', 'Ser-477' or 'Thr-479', facilitating the phosphorylation of the activation loop of AKT1 on 'Thr-308' by PDPK1/PDK1 which is a prerequisite for full activation. mTORC2 regulates the phosphorylation of SGK1 at 'Ser-422'. mTORC2 also modulates the phosphorylation of PRKCA on 'Ser-657'. Within mTORC2, MLST8 acts as a bridge between MAPKAP1/SIN1 and MTOR. In Mus musculus (Mouse), this protein is Target of rapamycin complex subunit LST8.